The sequence spans 513 residues: Histidine ammonia-lyase (513 aa).

Residues 145 to 147 (ASG) constitute a cross-link (5-imidazolinone (Ala-Gly)). The residue at position 146 (serine 146) is a 2,3-didehydroalanine (Ser).

This sequence belongs to the PAL/histidase family. Contains an active site 4-methylidene-imidazol-5-one (MIO), which is formed autocatalytically by cyclization and dehydration of residues Ala-Ser-Gly.

Its subcellular location is the cytoplasm. The catalysed reaction is L-histidine = trans-urocanate + NH4(+). Its pathway is amino-acid degradation; L-histidine degradation into L-glutamate; N-formimidoyl-L-glutamate from L-histidine: step 1/3. This Vibrio vulnificus (strain CMCP6) protein is Histidine ammonia-lyase.